A 261-amino-acid chain; its full sequence is 7beta-hydroxysteroid dehydrogenase (261 aa).

Residues 17 to 21, 40 to 41, and 66 to 67 contribute to the NADP(+) site; these read TEGIG, RR, and DL. Residue Y156 is the Proton acceptor of the active site.

The protein belongs to the short-chain dehydrogenases/reductases (SDR) family. Homodimer.

It catalyses the reaction a 7beta-hydroxysteroid + NADP(+) = a 7-oxosteroid + NADPH + H(+). It carries out the reaction ursocholate + NADP(+) = 3alpha,12alpha-dihydroxy-7-oxo-5beta-cholanate + NADPH + H(+). The enzyme catalyses 7-oxolithocholate + NADPH + H(+) = ursodeoxycholate + NADP(+). The catalysed reaction is 3alpha,7beta-dihydroxy-12-oxo-5beta-cholan-24-oate + NADP(+) = 7,12-dioxo-lithocholate + NADPH + H(+). It catalyses the reaction 7beta-hydroxy-3,12-dioxo-5beta-cholan-24-oate + NADP(+) = dehydrocholate + NADPH + H(+). 7beta-hydroxysteroid dehydrogenase that catalyzes the reduction of the 7-oxo group of 7-oxosteroids, such as 3alpha,12alpha-dihydroxy-7-oxo-5beta-cholanate, 7-oxolithocholate, 7,12-dioxo-lithocholate and dehydrocholate, to the corresponding 7beta-hydroxysteroids. Is also able to catalyze the reverse oxidation reactions. Together with 7alpha-HSDH encoded in the adjacent gene, is likely involved in the epimerization of the hydroxy group at C-7 of primary bile acids through 7-keto bile acid intermediates. The polypeptide is 7beta-hydroxysteroid dehydrogenase (Clostridium sardiniense (Clostridium absonum)).